Reading from the N-terminus, the 402-residue chain is MAKRSLSALNSDALRGKRVLVRVDFNVPLNDAGAITDDTRIRAALPTIKDLTGKGAKVILSAHFGRPKGQVNEDMRLTPVAARLSELLGAPVAKTDSCIGSDAEAKVAAMADGDVVLLENVRFFAEEEKNESGFAEKLAALAEVYVNDAFGAAHRAHASTEGVTKYLSPSVAGYLMEKELQYLQGAVDDPKRPLAAIVGGSKVSSKIGVLEALIDKCDKVLIGGGMIFTFYKARGLSVGKSLVEEDKLELAKELEAKAKAKGVQLLLPTDVVLADNFAPDANSQVASIDAIPEGWMGLDIGPDSIKVFQDALGDCKTVIWNGPMGVFEFDKFAAGTNAIATTLAELSAKGCCTIIGGGDSVAAVEKAGLAAQMSHISTGGGASLELLEGKVLPGVAALDEAA.

Substrate is bound by residues 24 to 26, R40, 63 to 66, R122, and R155; these read DFN and HFGR. Residues K206, G297, E328, and 357-360 each bind ATP; that span reads GGDS.

The protein belongs to the phosphoglycerate kinase family. Monomer.

It localises to the cytoplasm. It catalyses the reaction (2R)-3-phosphoglycerate + ATP = (2R)-3-phospho-glyceroyl phosphate + ADP. It functions in the pathway carbohydrate degradation; glycolysis; pyruvate from D-glyceraldehyde 3-phosphate: step 2/5. This chain is Phosphoglycerate kinase, found in Synechococcus sp. (strain RCC307).